Consider the following 167-residue polypeptide: Leptin (167 aa).

An N-terminal signal peptide occupies residues 1–21; that stretch reads MLCGPLCRFLWLWPYLSYVEA. Cysteine 117 and cysteine 167 form a disulfide bridge.

This sequence belongs to the leptin family.

The protein resides in the secreted. Functionally, key player in the regulation of energy balance and body weight control. Once released into the circulation, has central and peripheral effects by binding LEPR, found in many tissues, which results in the activation of several major signaling pathways. In the hypothalamus, acts as an appetite-regulating factor that induces a decrease in food intake and an increase in energy consumption by inducing anorexinogenic factors and suppressing orexigenic neuropeptides, also regulates bone mass and secretion of hypothalamo-pituitary-adrenal hormones. In the periphery, increases basal metabolism, influences reproductive function, regulates pancreatic beta-cell function and insulin secretion, is pro-angiogenic for endothelial cell and affects innate and adaptive immunity. In the arcuate nucleus of the hypothalamus, activates by depolarization POMC neurons inducing FOS and SOCS3 expression to release anorexigenic peptides and inhibits by hyperpolarization NPY neurons inducing SOCS3 with a consequent reduction on release of orexigenic peptides. In addition to its known satiety inducing effect, has a modulatory role in nutrient absorption. In the intestine, reduces glucose absorption by enterocytes by activating PKC and leading to a sequential activation of p38, PI3K and ERK signaling pathways which exerts an inhibitory effect on glucose absorption. Acts as a growth factor on certain tissues, through the activation of different signaling pathways increases expression of genes involved in cell cycle regulation such as CCND1, via JAK2-STAT3 pathway, or VEGFA, via MAPK1/3 and PI3K-AKT1 pathways. May also play an apoptotic role via JAK2-STAT3 pathway and up-regulation of BIRC5 expression. Pro-angiogenic, has mitogenic activity on vascular endothelial cells and plays a role in matrix remodeling by regulating the expression of matrix metalloproteinases (MMPs) and tissue inhibitors of metalloproteinases (TIMPs). In innate immunity, modulates the activity and function of neutrophils by increasing chemotaxis and the secretion of oxygen radicals. Increases phagocytosis by macrophages and enhances secretion of pro-inflammatory mediators. Increases cytotoxic ability of NK cells. Plays a pro-inflammatory role, in synergy with IL1B, by inducing NOS2 which promotes the production of IL6, IL8 and Prostaglandin E2, through a signaling pathway that involves JAK2, PI3K, MAP2K1/MEK1 and MAPK14/p38. In adaptive immunity, promotes the switch of memory T-cells towards T helper-1 cell immune responses. Increases CD4(+)CD25(-) T-cell proliferation and reduces autophagy during TCR (T-cell receptor) stimulation, through MTOR signaling pathway activation and BCL2 up-regulation. The polypeptide is Leptin (LEP) (Felis catus (Cat)).